A 263-amino-acid chain; its full sequence is 4-hydroxy-tetrahydrodipicolinate reductase (263 aa).

Residue G10–M15 participates in NAD(+) binding. R38 serves as a coordination point for NADP(+). NAD(+) contacts are provided by residues G97–T99 and A123–F126. The Proton donor/acceptor role is filled by H153. (S)-2,3,4,5-tetrahydrodipicolinate is bound at residue H154. The active-site Proton donor is K157. G163–T164 contributes to the (S)-2,3,4,5-tetrahydrodipicolinate binding site.

It belongs to the DapB family.

The protein resides in the cytoplasm. The enzyme catalyses (S)-2,3,4,5-tetrahydrodipicolinate + NAD(+) + H2O = (2S,4S)-4-hydroxy-2,3,4,5-tetrahydrodipicolinate + NADH + H(+). It carries out the reaction (S)-2,3,4,5-tetrahydrodipicolinate + NADP(+) + H2O = (2S,4S)-4-hydroxy-2,3,4,5-tetrahydrodipicolinate + NADPH + H(+). The protein operates within amino-acid biosynthesis; L-lysine biosynthesis via DAP pathway; (S)-tetrahydrodipicolinate from L-aspartate: step 4/4. Catalyzes the conversion of 4-hydroxy-tetrahydrodipicolinate (HTPA) to tetrahydrodipicolinate. In Dehalococcoides mccartyi (strain CBDB1), this protein is 4-hydroxy-tetrahydrodipicolinate reductase.